Consider the following 255-residue polypeptide: Probable ubiquitin carboxyl-terminal hydrolase (255 aa).

One can recognise a UCH catalytic domain in the interval 13–237 (NWIPLEANPE…IRFNLMGLVK (225 aa)). An interaction with ubiquitin region spans residues 16-21 (PLEANP). The active-site Nucleophile is C103. Residue H177 is the Proton donor of the active site. Residues 227–232 (EIRFNL) form an interaction with ubiquitin region. The interval 235–255 (LVKKPNEESEEEEEKEKEETK) is disordered. A compositionally biased stretch (acidic residues) spans 242–255 (ESEEEEEKEKEETK).

It belongs to the peptidase C12 family.

It localises to the cytoplasm. It catalyses the reaction Thiol-dependent hydrolysis of ester, thioester, amide, peptide and isopeptide bonds formed by the C-terminal Gly of ubiquitin (a 76-residue protein attached to proteins as an intracellular targeting signal).. In terms of biological role, ubiquitin-protein hydrolase is involved both in the processing of ubiquitin precursors and of ubiquitinated proteins. This enzyme is a thiol protease that recognizes and hydrolyzes a peptide bond at the C-terminal glycine of either ubiquitin or nedd8. The sequence is that of Probable ubiquitin carboxyl-terminal hydrolase (uch1) from Dictyostelium discoideum (Social amoeba).